The following is a 132-amino-acid chain: Interleukin-4 (132 aa).

Residues 1–24 (MGLTSQLIPTLVCLLALTSTFVHG) form the signal peptide. N-linked (GlcNAc...) asparagine glycans are attached at residues N28, N45, N62, N83, N95, and N101. Intrachain disulfides connect C48–C84 and C70–C104.

The protein belongs to the IL-4/IL-13 family.

It is found in the secreted. Its function is as follows. Participates in at least several B-cell activation processes as well as of other cell types. It is a costimulator of DNA-synthesis. It induces the expression of class II MHC molecules on resting B-cells. It enhances both secretion and cell surface expression of IgE and IgG1. It also regulates the expression of the low affinity Fc receptor for IgE (CD23) on both lymphocytes and monocytes. Positively regulates IL31RA expression in macrophages. Stimulates autophagy in dendritic cells by interfering with mTORC1 signaling and through the induction of RUFY4. The chain is Interleukin-4 (IL4) from Canis lupus familiaris (Dog).